A 368-amino-acid chain; its full sequence is 1-deoxy-D-xylulose 5-phosphate reductoisomerase (368 aa).

The NADPH site is built by T7, G8, S9, I10, G31, K32, N33, and N113. K114 contributes to the 1-deoxy-D-xylulose 5-phosphate binding site. E115 lines the NADPH pocket. Residue D133 coordinates Mn(2+). Residues S134, E135, S158, and H181 each contribute to the 1-deoxy-D-xylulose 5-phosphate site. Position 135 (E135) interacts with Mn(2+). Position 187 (G187) interacts with NADPH. Positions 194, 199, 200, and 203 each coordinate 1-deoxy-D-xylulose 5-phosphate. E203 is a binding site for Mn(2+).

It belongs to the DXR family. The cofactor is Mg(2+). Mn(2+) serves as cofactor.

It carries out the reaction 2-C-methyl-D-erythritol 4-phosphate + NADP(+) = 1-deoxy-D-xylulose 5-phosphate + NADPH + H(+). The protein operates within isoprenoid biosynthesis; isopentenyl diphosphate biosynthesis via DXP pathway; isopentenyl diphosphate from 1-deoxy-D-xylulose 5-phosphate: step 1/6. Functionally, catalyzes the NADPH-dependent rearrangement and reduction of 1-deoxy-D-xylulose-5-phosphate (DXP) to 2-C-methyl-D-erythritol 4-phosphate (MEP). The polypeptide is 1-deoxy-D-xylulose 5-phosphate reductoisomerase (Helicobacter pylori (strain ATCC 700392 / 26695) (Campylobacter pylori)).